The primary structure comprises 595 residues: DNA mismatch repair protein MutL (595 aa).

The protein belongs to the DNA mismatch repair MutL/HexB family.

Functionally, this protein is involved in the repair of mismatches in DNA. It is required for dam-dependent methyl-directed DNA mismatch repair. May act as a 'molecular matchmaker', a protein that promotes the formation of a stable complex between two or more DNA-binding proteins in an ATP-dependent manner without itself being part of a final effector complex. The polypeptide is DNA mismatch repair protein MutL (Rhodopseudomonas palustris (strain TIE-1)).